Consider the following 107-residue polypeptide: Ferredoxin CarAc (107 aa).

Positions Leu-6–Val-102 constitute a Rieske domain. The [2Fe-2S] cluster site is built by Cys-46, His-48, Cys-65, and His-68.

As to quaternary structure, monomer. Carbazole 1,9a-dioxygenase complex consists of a terminal oxygenase component CarAa, a ferredoxin reductase component CarAd and a ferredoxin component CarAc. The cofactor is [2Fe-2S] cluster.

Part of the multicomponent carbazole 1,9a-dioxygenase (CARDO), that converts carbazole (CAR) into 2-aminobiphenyl-2,3-diol. Acts as a mediator in the electron transfer from CarAd to CarAa. The chain is Ferredoxin CarAc (carAc) from Metapseudomonas resinovorans (Pseudomonas resinovorans).